The following is a 543-amino-acid chain: CTP synthase (543 aa).

Residues 1 to 266 (MTKFIFVTGG…DDIICERFGI (266 aa)) form an amidoligase domain region. S13 contributes to the CTP binding site. A UTP-binding site is contributed by S13. ATP is bound by residues 14-19 (SLGKGI) and D71. The Mg(2+) site is built by D71 and E140. CTP contacts are provided by residues 147–149 (DIE), 187–192 (KTKPTQ), and K223. UTP is bound by residues 187-192 (KTKPTQ) and K223. The Glutamine amidotransferase type-1 domain occupies 291 to 543 (TVAIVGKYVE…VKAAIDHQNI (253 aa)). G354 is an L-glutamine binding site. Residue C381 is the Nucleophile; for glutamine hydrolysis of the active site. Residues 382–385 (LGMQ), E404, and R471 contribute to the L-glutamine site. Residues H516 and E518 contribute to the active site.

It belongs to the CTP synthase family. As to quaternary structure, homotetramer.

The enzyme catalyses UTP + L-glutamine + ATP + H2O = CTP + L-glutamate + ADP + phosphate + 2 H(+). It catalyses the reaction L-glutamine + H2O = L-glutamate + NH4(+). It carries out the reaction UTP + NH4(+) + ATP = CTP + ADP + phosphate + 2 H(+). It functions in the pathway pyrimidine metabolism; CTP biosynthesis via de novo pathway; CTP from UDP: step 2/2. Its activity is regulated as follows. Allosterically activated by GTP, when glutamine is the substrate; GTP has no effect on the reaction when ammonia is the substrate. The allosteric effector GTP functions by stabilizing the protein conformation that binds the tetrahedral intermediate(s) formed during glutamine hydrolysis. Inhibited by the product CTP, via allosteric rather than competitive inhibition. In terms of biological role, catalyzes the ATP-dependent amination of UTP to CTP with either L-glutamine or ammonia as the source of nitrogen. Regulates intracellular CTP levels through interactions with the four ribonucleotide triphosphates. The chain is CTP synthase from Psychrobacter sp. (strain PRwf-1).